Here is a 580-residue protein sequence, read N- to C-terminus: Dihydroxy-acid dehydratase (580 aa).

Asp95 serves as a coordination point for Mg(2+). Cys136 contacts [2Fe-2S] cluster. The Mg(2+) site is built by Asp137 and Lys138. Position 138 is an N6-carboxylysine (Lys138). Cys209 serves as a coordination point for [2Fe-2S] cluster. Position 462 (Glu462) interacts with Mg(2+). The Proton acceptor role is filled by Ser488.

It belongs to the IlvD/Edd family. Homodimer. It depends on [2Fe-2S] cluster as a cofactor. Requires Mg(2+) as cofactor.

The catalysed reaction is (2R)-2,3-dihydroxy-3-methylbutanoate = 3-methyl-2-oxobutanoate + H2O. It carries out the reaction (2R,3R)-2,3-dihydroxy-3-methylpentanoate = (S)-3-methyl-2-oxopentanoate + H2O. It participates in amino-acid biosynthesis; L-isoleucine biosynthesis; L-isoleucine from 2-oxobutanoate: step 3/4. The protein operates within amino-acid biosynthesis; L-valine biosynthesis; L-valine from pyruvate: step 3/4. In terms of biological role, functions in the biosynthesis of branched-chain amino acids. Catalyzes the dehydration of (2R,3R)-2,3-dihydroxy-3-methylpentanoate (2,3-dihydroxy-3-methylvalerate) into 2-oxo-3-methylpentanoate (2-oxo-3-methylvalerate) and of (2R)-2,3-dihydroxy-3-methylbutanoate (2,3-dihydroxyisovalerate) into 2-oxo-3-methylbutanoate (2-oxoisovalerate), the penultimate precursor to L-isoleucine and L-valine, respectively. The protein is Dihydroxy-acid dehydratase of Leuconostoc mesenteroides subsp. mesenteroides (strain ATCC 8293 / DSM 20343 / BCRC 11652 / CCM 1803 / JCM 6124 / NCDO 523 / NBRC 100496 / NCIMB 8023 / NCTC 12954 / NRRL B-1118 / 37Y).